We begin with the raw amino-acid sequence, 564 residues long: Rhodopsin kinase GRK1 (564 aa).

Positions 1–15 (MDFGSLETVVANSAF) are interaction with RCVRN. The segment at 1–189 (MDFGSLETVV…LEAQPIGEDW (189 aa)) is N-terminal. Residue serine 5 is modified to Phosphoserine. At threonine 8 the chain carries Phosphothreonine. The residue at position 21 (serine 21) is a Phosphoserine; by PKA and autocatalysis. An RGS domain is found at 58-175 (FDNLCSEQPI…LGSLYFLRFL (118 aa)). The Protein kinase domain occupies 190-455 (FLDFRVLGKG…CDALRANVLF (266 aa)). ATP is bound by residues 196 to 204 (LGKGGFGEV) and lysine 219. Aspartate 317 functions as the Proton acceptor in the catalytic mechanism. The AGC-kinase C-terminal domain maps to 456-521 (KDISWRQLEA…GNCSIPWQEE (66 aa)). Residues 456–564 (KDISWRQLEA…TAKSGMCLIS (109 aa)) form a C-terminal region. Serine 491 carries the post-translational modification Phosphoserine; by autocatalysis. Threonine 492 carries the post-translational modification Phosphothreonine; by autocatalysis. The residue at position 561 (cysteine 561) is a Cysteine methyl ester. The S-farnesyl cysteine moiety is linked to residue cysteine 561. The propeptide at 562–564 (LIS) is removed in mature form.

It belongs to the protein kinase superfamily. AGC Ser/Thr protein kinase family. GPRK subfamily. Interacts (via N-terminus) with RCVRN (via C-terminus); the interaction is Ca(2+)-dependent. Interacts (when prenylated) with PDE6D; this promotes release from membranes. May form a complex composed of RHO, GRK1 and RCVRN in a Ca(2+)-dependent manner; RCVRN prevents the interaction between GRK1 and RHO. Autophosphorylated, Ser-21 is a minor site of autophosphorylation compared to Ser-491 and Thr-492. Phosphorylation at Ser-21 is regulated by light and activated by cAMP. Post-translationally, farnesylation is required for full activity. In terms of tissue distribution, detected in retina (at protein level). Retina-specific. Expressed in rod and cone photoreceptor cells.

The protein localises to the membrane. It is found in the cell projection. The protein resides in the cilium. Its subcellular location is the photoreceptor outer segment. The catalysed reaction is L-threonyl-[rhodopsin] + ATP = O-phospho-L-threonyl-[rhodopsin] + ADP + H(+). It catalyses the reaction L-seryl-[rhodopsin] + ATP = O-phospho-L-seryl-[rhodopsin] + ADP + H(+). Its activity is regulated as follows. Inhibited by RCVRN, which prevents the interaction between GRK1 and RHO. Inhibition is calcium-dependent. Its function is as follows. Retina-specific kinase involved in the signal turnoff via phosphorylation of rhodopsin (RHO), the G protein- coupled receptor that initiates the phototransduction cascade. This rapid desensitization is essential for scotopic vision and permits rapid adaptation to changes in illumination. May play a role in the maintenance of the outer nuclear layer in the retina. This Rattus norvegicus (Rat) protein is Rhodopsin kinase GRK1.